The following is a 240-amino-acid chain: Methylthioribulose-1-phosphate dehydratase (240 aa).

C99 is a binding site for substrate. Zn(2+)-binding residues include H116 and H118. Residue E145 is the Proton donor/acceptor of the active site. A Zn(2+)-binding site is contributed by H201.

This sequence belongs to the aldolase class II family. MtnB subfamily. It depends on Zn(2+) as a cofactor.

It localises to the cytoplasm. It catalyses the reaction 5-(methylsulfanyl)-D-ribulose 1-phosphate = 5-methylsulfanyl-2,3-dioxopentyl phosphate + H2O. Its pathway is amino-acid biosynthesis; L-methionine biosynthesis via salvage pathway; L-methionine from S-methyl-5-thio-alpha-D-ribose 1-phosphate: step 2/6. Functionally, catalyzes the dehydration of methylthioribulose-1-phosphate (MTRu-1-P) into 2,3-diketo-5-methylthiopentyl-1-phosphate (DK-MTP-1-P). This chain is Methylthioribulose-1-phosphate dehydratase, found in Ajellomyces capsulatus (strain H143) (Darling's disease fungus).